Reading from the N-terminus, the 225-residue chain is NAD(P)H-quinone oxidoreductase subunit K, chloroplastic (225 aa).

Residues C43, C44, C108, and C139 each contribute to the [4Fe-4S] cluster site.

It belongs to the complex I 20 kDa subunit family. NDH is composed of at least 16 different subunits, 5 of which are encoded in the nucleus. [4Fe-4S] cluster is required as a cofactor.

The protein localises to the plastid. Its subcellular location is the chloroplast thylakoid membrane. It carries out the reaction a plastoquinone + NADH + (n+1) H(+)(in) = a plastoquinol + NAD(+) + n H(+)(out). The enzyme catalyses a plastoquinone + NADPH + (n+1) H(+)(in) = a plastoquinol + NADP(+) + n H(+)(out). In terms of biological role, NDH shuttles electrons from NAD(P)H:plastoquinone, via FMN and iron-sulfur (Fe-S) centers, to quinones in the photosynthetic chain and possibly in a chloroplast respiratory chain. The immediate electron acceptor for the enzyme in this species is believed to be plastoquinone. Couples the redox reaction to proton translocation, and thus conserves the redox energy in a proton gradient. The chain is NAD(P)H-quinone oxidoreductase subunit K, chloroplastic from Daucus carota (Wild carrot).